Consider the following 381-residue polypeptide: Alpha-methylacyl-CoA racemase (381 aa).

Substrate is bound by residues Arg36 and 54–57 (LDLK). Residue Lys57 is modified to N6-acetyllysine. Residues Lys86 and Lys100 each carry the N6-acetyllysine; alternate modification. N6-succinyllysine; alternate is present on residues Lys86 and Lys100. The residue at position 117 (Lys117) is an N6-acetyllysine. 120 to 125 (GHDINY) lines the substrate pocket. His121 (proton acceptor) is an active-site residue. Asp151 functions as the Proton donor in the catalytic mechanism. Lys267 bears the N6-succinyllysine mark. The interval 316–344 (TDGEQLPSPRPAPLLSRTPAVPSAKRDPS) is disordered. The Microbody targeting signal signature appears at 379 to 381 (ANL).

This sequence belongs to the CoA-transferase III family. As to quaternary structure, monomer.

It localises to the peroxisome. It is found in the mitochondrion. It carries out the reaction a (2S)-2-methylacyl-CoA = a (2R)-2-methylacyl-CoA. It catalyses the reaction (25R)-3alpha,7alpha,12alpha-trihydroxy-5beta-cholestan-26-oyl-CoA = (25S)-3alpha,7alpha,12alpha-trihydroxy-5beta-cholestan-26-oyl-CoA. The enzyme catalyses (2R,6)-dimethylheptanoyl-CoA = (2S,6)-dimethylheptanoyl-CoA. Its pathway is lipid metabolism; bile acid biosynthesis. The protein operates within lipid metabolism; fatty acid metabolism. Its function is as follows. Catalyzes the interconversion of (R)- and (S)-stereoisomers of alpha-methyl-branched-chain fatty acyl-CoA esters. Acts only on coenzyme A thioesters, not on free fatty acids, and accepts as substrates a wide range of alpha-methylacyl-CoAs, including pristanoyl-CoA, trihydroxycoprostanoyl-CoA (an intermediate in bile acid synthesis), and arylpropionic acids like the anti-inflammatory drug ibuprofen (2-(4-isobutylphenyl)propionic acid) but neither 3-methyl-branched nor linear-chain acyl-CoAs. The protein is Alpha-methylacyl-CoA racemase (Amacr) of Mus musculus (Mouse).